A 279-amino-acid chain; its full sequence is Ribosomal RNA small subunit methyltransferase A (279 aa).

Positions 15, 17, 42, 64, 89, and 109 each coordinate S-adenosyl-L-methionine.

This sequence belongs to the class I-like SAM-binding methyltransferase superfamily. rRNA adenine N(6)-methyltransferase family. RsmA subfamily.

The protein resides in the cytoplasm. The enzyme catalyses adenosine(1518)/adenosine(1519) in 16S rRNA + 4 S-adenosyl-L-methionine = N(6)-dimethyladenosine(1518)/N(6)-dimethyladenosine(1519) in 16S rRNA + 4 S-adenosyl-L-homocysteine + 4 H(+). Specifically dimethylates two adjacent adenosines (A1518 and A1519) in the loop of a conserved hairpin near the 3'-end of 16S rRNA in the 30S particle. May play a critical role in biogenesis of 30S subunits. The sequence is that of Ribosomal RNA small subunit methyltransferase A from Prochlorococcus marinus (strain SARG / CCMP1375 / SS120).